Here is a 324-residue protein sequence, read N- to C-terminus: Large ribosomal subunit protein uL3m (324 aa).

A mitochondrion-targeting transit peptide spans 1–41 (MAAVPRGLLSRINQFLSIRSITPSSSESLPHCSSFFLIRRF). A disordered region spans residues 206–229 (PASHGASLSHRSGGSTGQRDAPGK).

Belongs to the universal ribosomal protein uL3 family. As to quaternary structure, part of the 50S ribosomal subunit.

The protein localises to the mitochondrion. In terms of biological role, one of the primary rRNA binding proteins, it binds directly near the 3'-end of the 23S rRNA, where it nucleates assembly of the 50S subunit. This chain is Large ribosomal subunit protein uL3m, found in Arabidopsis thaliana (Mouse-ear cress).